A 287-amino-acid chain; its full sequence is Small ribosomal subunit protein uS2 (287 aa).

Low complexity predominate over residues 254–277 (LASATASATPSATASTTALTDAPA). Residues 254 to 287 (LASATASATPSATASTTALTDAPAGATEPTTDAS) are disordered.

This sequence belongs to the universal ribosomal protein uS2 family.

The sequence is that of Small ribosomal subunit protein uS2 (rpsB) from Mycobacterium tuberculosis (strain CDC 1551 / Oshkosh).